The sequence spans 91 residues: UPF0250 protein HCH_05838 (91 aa).

It belongs to the UPF0250 family.

This chain is UPF0250 protein HCH_05838, found in Hahella chejuensis (strain KCTC 2396).